The chain runs to 306 residues: Acetaldehyde dehydrogenase 3 (306 aa).

The active-site Acyl-thioester intermediate is the Cys131. Residues 162–170 and Asn273 each bind NAD(+); that span reads SVGPGTRKN.

It belongs to the acetaldehyde dehydrogenase family.

It carries out the reaction acetaldehyde + NAD(+) + CoA = acetyl-CoA + NADH + H(+). The polypeptide is Acetaldehyde dehydrogenase 3 (Burkholderia lata (strain ATCC 17760 / DSM 23089 / LMG 22485 / NCIMB 9086 / R18194 / 383)).